The following is a 196-amino-acid chain: MKVNPNNIELIISAVKEEQYPKTELSEVALSGRSNVGKSTFINSMIGRKNMARTSQQPGKTQTLNFYNIDEQLIFVDVPGYGYAKVSKTQREKFGKMIEEYITKRENLQLVIQLVDLRHDPTQDDILMYNYLKHFDIPTLVICTKEDKIPKGKVQKHIKNIKTQLDMDPDDTIVSYSSIQNNKQQQIWNLIEPYIS.

The 173-residue stretch at 24 to 196 folds into the EngB-type G domain; sequence ELSEVALSGR…IWNLIEPYIS (173 aa). GTP contacts are provided by residues 32-39, 59-63, 77-80, 144-147, and 176-178; these read GRSNVGKS, GKTQT, DVPG, TKED, and YSS. S39 and T61 together coordinate Mg(2+).

The protein belongs to the TRAFAC class TrmE-Era-EngA-EngB-Septin-like GTPase superfamily. EngB GTPase family. Mg(2+) is required as a cofactor.

Necessary for normal cell division and for the maintenance of normal septation. This chain is Probable GTP-binding protein EngB, found in Staphylococcus aureus (strain MW2).